Reading from the N-terminus, the 128-residue chain is Disintegrin lebein-2-alpha (128 aa).

Positions 1 to 20 (MIQVLLVTICLAVFPFHGSS) are cleaved as a signal peptide. The propeptide occupies 21 to 46 (IILESGNVNDYEVVYPKKVTLLPTGA). In terms of domain architecture, Disintegrin spans 47 to 111 (MNSANPCCDP…SDCPRNPWKS (65 aa)). 4 disulfides stabilise this stretch: cysteine 53-cysteine 76, cysteine 67-cysteine 73, cysteine 72-cysteine 97, and cysteine 85-cysteine 104. The Cell attachment site; atypical (MLD) signature appears at 89–91 (MLD). A propeptide spanning residues 112–128 (EEDEMKWSATAKGSVLM) is cleaved from the precursor.

Belongs to the disintegrin family. Dimeric disintegrin subfamily. In terms of assembly, heterodimer with subunit beta; disulfide-linked. Expressed by the venom gland.

It is found in the secreted. In terms of biological role, inhibits ADP-induced human platelet aggregation. Antagonist of alpha-IIb/beta-3 (ITGA2B/ITGB3). Also avidly binds to the laminin-binding beta-1 integrins (alpha-3/beta-1 (ITGA3/ITGB1), alpha-6/beta-1 (ITGA6/ITGB1), and alpha-7/beta-1 (ITGA7/ITGB1)) in an RGD-independent manner. The sequence is that of Disintegrin lebein-2-alpha from Macrovipera lebetinus (Levantine viper).